The sequence spans 180 residues: NADH-quinone oxidoreductase subunit I 1 (180 aa).

4Fe-4S ferredoxin-type domains lie at 50–80 (LSRD…LQKT) and 90–119 (EFFR…LTPD). 8 residues coordinate [4Fe-4S] cluster: Cys-60, Cys-63, Cys-66, Cys-70, Cys-99, Cys-102, Cys-105, and Cys-109.

The protein belongs to the complex I 23 kDa subunit family. In terms of assembly, NDH-1 is composed of 14 different subunits. Subunits NuoA, H, J, K, L, M, N constitute the membrane sector of the complex. [4Fe-4S] cluster serves as cofactor.

It localises to the cell inner membrane. It catalyses the reaction a quinone + NADH + 5 H(+)(in) = a quinol + NAD(+) + 4 H(+)(out). NDH-1 shuttles electrons from NADH, via FMN and iron-sulfur (Fe-S) centers, to quinones in the respiratory chain. The immediate electron acceptor for the enzyme in this species is believed to be ubiquinone. Couples the redox reaction to proton translocation (for every two electrons transferred, four hydrogen ions are translocated across the cytoplasmic membrane), and thus conserves the redox energy in a proton gradient. In Nitrosococcus oceani (strain ATCC 19707 / BCRC 17464 / JCM 30415 / NCIMB 11848 / C-107), this protein is NADH-quinone oxidoreductase subunit I 1.